Here is a 243-residue protein sequence, read N- to C-terminus: MSDPLIVSYNDSAIYQSDINILKSNQWLNDSIISFYLEWLKDGGEDNKNKIPNQVLLLSPSVVFCCSFVESEQEIQLMFEQPLSLKTKEVIFFPLTNNRDPNVIGGGTHWSLLIFIKSLNKFIYYDSINSFNSSDAIFIISKFKFLLSSPPPKTNLKEFLINQKTPQQQNGYDCGLYVLSIIEELLKLIIKENENNKGEENKISYKDLLLSEFTNELLFKEITPNYIKDKRVEILNTILKLKK.

The segment at 12-185 (SAIYQSDINI…LYVLSIIEEL (174 aa)) is protease. Active-site residues include histidine 109 and aspartate 126. The active-site Nucleophile is the cysteine 174.

Belongs to the peptidase C48 family.

Functionally, protease that catalyzes two essential functions in the nedd8 pathway: processing of full-length nedd8 to its mature form and deconjugation of nedd8 from targeted proteins. This chain is Probable sentrin-specific protease 8 (senp8), found in Dictyostelium discoideum (Social amoeba).